Here is a 509-residue protein sequence, read N- to C-terminus: MEICSLINRLIKYALKNSLITEDDVMFVRNELMALLHLKDWQDVKENCQIPEYPQEILDKICDYAVEQKIIEDGVTDRDIFDTEIMGKFTAFPREIIETFKELSQQNIKLATDFFYNFSKKTNYIRTERIEKNLYWKSLTEYGDLEITINLSKPEKDPKEIERQKNMPQVNYPKCLLCYENVGFAGTLTHPARQNHRVIPLTLDNERWYFQYSPYVYYNEHAIIFCSEHREMKINRDTFSRTLDFINQFPHYFIGSNADLPIVGGSILSHDHYQGGNHEFPMAKSEIEKEVIFDKYPNIKAGIVKWPMSVLRLKSLNRKDLVDLADKTLKAWREYSDEEVGVFAYTNSTPHNTITPIARKRGDYFEIDLVLRNNRTDEANPLGIFHPHSEHHNIKKENIGLIEVMGLAVLPGRLKFEMRKIAEYLKDEDFEKKISDDKDTAKHLTWLKAFINKYSNLKTLSVDEILENILNVEIGLTFSRVLEDAGVFKRDEKGKNAFLKFINHIGGRF.

Belongs to the galactose-1-phosphate uridylyltransferase type 2 family.

The protein localises to the cytoplasm. The enzyme catalyses alpha-D-galactose 1-phosphate + UDP-alpha-D-glucose = alpha-D-glucose 1-phosphate + UDP-alpha-D-galactose. The protein operates within carbohydrate metabolism; galactose metabolism. This chain is Galactose-1-phosphate uridylyltransferase, found in Fusobacterium nucleatum subsp. nucleatum (strain ATCC 25586 / DSM 15643 / BCRC 10681 / CIP 101130 / JCM 8532 / KCTC 2640 / LMG 13131 / VPI 4355).